The primary structure comprises 300 residues: Recombination-associated protein RdgC (300 aa).

This sequence belongs to the RdgC family.

It is found in the cytoplasm. The protein localises to the nucleoid. Functionally, may be involved in recombination. The polypeptide is Recombination-associated protein RdgC (Herminiimonas arsenicoxydans).